A 741-amino-acid polypeptide reads, in one-letter code: Beta-galactosidase 10 (741 aa).

A signal peptide spans 1-29 (MNRVTTESIASTAILVVMVFLFSWRSIEA). The N-linked (GlcNAc...) asparagine glycan is linked to asparagine 31. Glutamate 188 functions as the Proton donor in the catalytic mechanism. The active-site Nucleophile is glutamate 257. N-linked (GlcNAc...) asparagine glycans are attached at residues asparagine 358, asparagine 396, asparagine 469, asparagine 525, and asparagine 583.

The protein belongs to the glycosyl hydrolase 35 family. Ubiquitous.

Its subcellular location is the secreted. It is found in the extracellular space. The protein localises to the apoplast. The enzyme catalyses Hydrolysis of terminal non-reducing beta-D-galactose residues in beta-D-galactosides.. The polypeptide is Beta-galactosidase 10 (BGAL10) (Arabidopsis thaliana (Mouse-ear cress)).